A 348-amino-acid polypeptide reads, in one-letter code: GTPase Obg 1 (348 aa).

An Obg domain is found at 1-159 (MSFVDEAKIH…HCVLLKLKIV (159 aa)). Positions 160–329 (SDVGIIGMPN…LHAQVKKAVV (170 aa)) constitute an OBG-type G domain. GTP contacts are provided by residues 166–173 (GMPNAGKS), 191–195 (FTTLE), 212–215 (DIPG), 279–282 (NKCD), and 310–312 (GDE). Residues Ser173 and Thr193 each contribute to the Mg(2+) site.

The protein belongs to the TRAFAC class OBG-HflX-like GTPase superfamily. OBG GTPase family. As to quaternary structure, monomer. Mg(2+) serves as cofactor.

Its subcellular location is the cytoplasm. An essential GTPase which binds GTP, GDP and possibly (p)ppGpp with moderate affinity, with high nucleotide exchange rates and a fairly low GTP hydrolysis rate. Plays a role in control of the cell cycle, stress response, ribosome biogenesis and in those bacteria that undergo differentiation, in morphogenesis control. The protein is GTPase Obg 1 of Anaplasma marginale (strain St. Maries).